The following is a 94-amino-acid chain: uncharacterized protein (94 aa).

Helical transmembrane passes span 7-24 (IFFI…SFNV) and 39-61 (AVPI…LLFL). Residues 68–94 (TRKQKREDSPTSAPTGGVSSPEHVDVP) form a disordered region.

It is found in the cell membrane. This is an uncharacterized protein from Treponema pallidum (strain Nichols).